The following is a 134-amino-acid chain: MKPSERRKARRLAVQAIYSWQLSGNNIADVEHEFLTEQSLDGVDVAYFRELFAGVATKKTQLDELIIPHLDRPIDEVSPVEKAIVRLAAYELTFRKDVPFKVAINEAIELAKAFGADESHKFVNGLLDKLVARK.

It belongs to the NusB family.

Functionally, involved in transcription antitermination. Required for transcription of ribosomal RNA (rRNA) genes. Binds specifically to the boxA antiterminator sequence of the ribosomal RNA (rrn) operons. This Shewanella oneidensis (strain ATCC 700550 / JCM 31522 / CIP 106686 / LMG 19005 / NCIMB 14063 / MR-1) protein is Transcription antitermination protein NusB.